Here is a 198-residue protein sequence, read N- to C-terminus: Large ribosomal subunit protein bL9 (198 aa).

Over residues 156 to 166 (RGEDISTRQED) the composition is skewed to basic and acidic residues. Residues 156-198 (RGEDISTRQEDQDAAAEALAAAGEFFDPEAHNDGEQEEEAGDK) form a disordered region.

It belongs to the bacterial ribosomal protein bL9 family.

Functionally, binds to the 23S rRNA. The polypeptide is Large ribosomal subunit protein bL9 (Rhodopseudomonas palustris (strain BisB18)).